The sequence spans 177 residues: Meiotically up-regulated gene 121 protein (177 aa).

Residues 1 to 23 (MKGFVVISRFILTLFILITPGLA) form the signal peptide. The N-linked (GlcNAc...) asparagine glycan is linked to N121.

The protein localises to the endoplasmic reticulum. Its subcellular location is the golgi apparatus. In terms of biological role, has a role in meiosis. This is Meiotically up-regulated gene 121 protein (mug121) from Schizosaccharomyces pombe (strain 972 / ATCC 24843) (Fission yeast).